A 225-amino-acid polypeptide reads, in one-letter code: Small ribosomal subunit protein eS1 (225 aa).

Residues 206-216 show a composition bias toward acidic residues; it reads PVEEPAAEEVA. Residues 206–225 are disordered; it reads PVEEPAAEEVAEAPAAETQE.

This sequence belongs to the eukaryotic ribosomal protein eS1 family.

This Methanococcus maripaludis (strain C5 / ATCC BAA-1333) protein is Small ribosomal subunit protein eS1.